Reading from the N-terminus, the 185-residue chain is Ribosome-recycling factor (185 aa).

This sequence belongs to the RRF family.

Its subcellular location is the cytoplasm. Functionally, responsible for the release of ribosomes from messenger RNA at the termination of protein biosynthesis. May increase the efficiency of translation by recycling ribosomes from one round of translation to another. This Buchnera aphidicola subsp. Acyrthosiphon pisum (strain APS) (Acyrthosiphon pisum symbiotic bacterium) protein is Ribosome-recycling factor.